The chain runs to 1209 residues: ATP-dependent helicase/nuclease subunit A (1209 aa).

The UvrD-like helicase ATP-binding domain maps to 9-482 (SQWTDEQWQA…IDLAKNFRSR (474 aa)). Position 30–37 (30–37 (AAAGSGKT)) interacts with ATP. Residues 510–798 (AALRFGAQDY…RMMTIHKSKG (289 aa)) enclose the UvrD-like helicase C-terminal domain.

This sequence belongs to the helicase family. AddA subfamily. In terms of assembly, heterodimer of AddA and AddB/RexB. Mg(2+) is required as a cofactor.

It catalyses the reaction Couples ATP hydrolysis with the unwinding of duplex DNA by translocating in the 3'-5' direction.. It carries out the reaction ATP + H2O = ADP + phosphate + H(+). Its function is as follows. The heterodimer acts as both an ATP-dependent DNA helicase and an ATP-dependent, dual-direction single-stranded exonuclease. Recognizes the chi site generating a DNA molecule suitable for the initiation of homologous recombination. The AddA nuclease domain is required for chi fragment generation; this subunit has the helicase and 3' -&gt; 5' nuclease activities. This is ATP-dependent helicase/nuclease subunit A from Anoxybacillus flavithermus (strain DSM 21510 / WK1).